Here is a 175-residue protein sequence, read N- to C-terminus: Calcineurin subunit B (175 aa).

EF-hand domains lie at 21–56 (PELM…ANNP), 60–88 (RMIA…FSSK), 90–125 (GRDE…MVGN), and 131–166 (QLQQ…TDIV). Ca(2+) contacts are provided by Asp-34, Asp-36, Ser-38, Ser-40, Glu-45, Asp-66, Asp-68, Ser-70, Thr-72, Glu-77, Asp-103, Asp-105, Asp-107, Tyr-109, Glu-114, Asp-144, Asp-146, Asp-148, Lys-150, and Glu-155.

The protein belongs to the calcineurin regulatory subunit family. In terms of assembly, composed of a catalytic subunit (A) and a regulatory subunit (B).

Functionally, regulatory subunit of calcineurin, a calcium-dependent, calmodulin stimulated protein phosphatase. Confers calcium sensitivity. Plays a central role in virulence and antifungal drug action. This is Calcineurin subunit B (CNB1) from Cryptococcus neoformans var. neoformans serotype D (strain B-3501A) (Filobasidiella neoformans).